The sequence spans 148 residues: Ribosome-binding factor A (148 aa).

Residues 120–148 (AKAREGASYAGDADPYRTAEPDADDAPRA) form a disordered region. Residues 133–148 (DPYRTAEPDADDAPRA) are compositionally biased toward basic and acidic residues.

Belongs to the RbfA family. Monomer. Binds 30S ribosomal subunits, but not 50S ribosomal subunits or 70S ribosomes.

It is found in the cytoplasm. One of several proteins that assist in the late maturation steps of the functional core of the 30S ribosomal subunit. Associates with free 30S ribosomal subunits (but not with 30S subunits that are part of 70S ribosomes or polysomes). Required for efficient processing of 16S rRNA. May interact with the 5'-terminal helix region of 16S rRNA. This chain is Ribosome-binding factor A, found in Micrococcus luteus (strain ATCC 4698 / DSM 20030 / JCM 1464 / CCM 169 / CCUG 5858 / IAM 1056 / NBRC 3333 / NCIMB 9278 / NCTC 2665 / VKM Ac-2230) (Micrococcus lysodeikticus).